A 141-amino-acid polypeptide reads, in one-letter code: Nucleoside diphosphate kinase (141 aa).

ATP-binding residues include Lys11, Phe59, Arg87, Thr93, Arg104, and Asn114. His117 acts as the Pros-phosphohistidine intermediate in catalysis.

It belongs to the NDK family. In terms of assembly, homotetramer. Mg(2+) serves as cofactor.

Its subcellular location is the cytoplasm. It catalyses the reaction a 2'-deoxyribonucleoside 5'-diphosphate + ATP = a 2'-deoxyribonucleoside 5'-triphosphate + ADP. It carries out the reaction a ribonucleoside 5'-diphosphate + ATP = a ribonucleoside 5'-triphosphate + ADP. Functionally, major role in the synthesis of nucleoside triphosphates other than ATP. The ATP gamma phosphate is transferred to the NDP beta phosphate via a ping-pong mechanism, using a phosphorylated active-site intermediate. The polypeptide is Nucleoside diphosphate kinase (Verminephrobacter eiseniae (strain EF01-2)).